We begin with the raw amino-acid sequence, 398 residues long: Succinate--CoA ligase [ADP-forming] subunit beta (398 aa).

The ATP-grasp domain occupies 9–254 (KRLLHTYGAP…LSEEDEKEIE (246 aa)). ATP contacts are provided by residues lysine 46, 53–55 (GRG), glutamate 109, alanine 112, and glutamate 117. Mg(2+)-binding residues include asparagine 209 and aspartate 223. Substrate is bound by residues asparagine 274 and 331–333 (GIM).

It belongs to the succinate/malate CoA ligase beta subunit family. In terms of assembly, heterotetramer of two alpha and two beta subunits. Mg(2+) is required as a cofactor.

It catalyses the reaction succinate + ATP + CoA = succinyl-CoA + ADP + phosphate. The catalysed reaction is GTP + succinate + CoA = succinyl-CoA + GDP + phosphate. The protein operates within carbohydrate metabolism; tricarboxylic acid cycle; succinate from succinyl-CoA (ligase route): step 1/1. Succinyl-CoA synthetase functions in the citric acid cycle (TCA), coupling the hydrolysis of succinyl-CoA to the synthesis of either ATP or GTP and thus represents the only step of substrate-level phosphorylation in the TCA. The beta subunit provides nucleotide specificity of the enzyme and binds the substrate succinate, while the binding sites for coenzyme A and phosphate are found in the alpha subunit. The protein is Succinate--CoA ligase [ADP-forming] subunit beta of Brucella anthropi (strain ATCC 49188 / DSM 6882 / CCUG 24695 / JCM 21032 / LMG 3331 / NBRC 15819 / NCTC 12168 / Alc 37) (Ochrobactrum anthropi).